The chain runs to 529 residues: Bifunctional purine biosynthesis protein PurH (529 aa).

In terms of domain architecture, MGS-like spans 1–148 (MQQRRPVRRA…KNHKDVAIVV (148 aa)). Lysine 287 is modified (N6-acetyllysine).

Belongs to the PurH family.

The enzyme catalyses (6R)-10-formyltetrahydrofolate + 5-amino-1-(5-phospho-beta-D-ribosyl)imidazole-4-carboxamide = 5-formamido-1-(5-phospho-D-ribosyl)imidazole-4-carboxamide + (6S)-5,6,7,8-tetrahydrofolate. It carries out the reaction IMP + H2O = 5-formamido-1-(5-phospho-D-ribosyl)imidazole-4-carboxamide. It functions in the pathway purine metabolism; IMP biosynthesis via de novo pathway; 5-formamido-1-(5-phospho-D-ribosyl)imidazole-4-carboxamide from 5-amino-1-(5-phospho-D-ribosyl)imidazole-4-carboxamide (10-formyl THF route): step 1/1. It participates in purine metabolism; IMP biosynthesis via de novo pathway; IMP from 5-formamido-1-(5-phospho-D-ribosyl)imidazole-4-carboxamide: step 1/1. The polypeptide is Bifunctional purine biosynthesis protein PurH (Escherichia coli O9:H4 (strain HS)).